The sequence spans 925 residues: Bifunctional uridylyltransferase/uridylyl-removing enzyme (925 aa).

The tract at residues 1-382 (MVLPTTKDAT…PPGAEVRRVP (382 aa)) is uridylyltransferase. Residues 383–738 (DSDDFIIDNN…VGFDEARGVT (356 aa)) are uridylyl-removing. Residues 498 to 621 (VDEHLIRCIG…VQSVERMKLL (124 aa)) form the HD domain. ACT domains follow at residues 739–820 (ELTI…DVMP) and 849–925 (MIEV…NTAE).

It belongs to the GlnD family. Mg(2+) is required as a cofactor.

It carries out the reaction [protein-PII]-L-tyrosine + UTP = [protein-PII]-uridylyl-L-tyrosine + diphosphate. The catalysed reaction is [protein-PII]-uridylyl-L-tyrosine + H2O = [protein-PII]-L-tyrosine + UMP + H(+). Its activity is regulated as follows. Uridylyltransferase (UTase) activity is inhibited by glutamine, while glutamine activates uridylyl-removing (UR) activity. Its function is as follows. Modifies, by uridylylation and deuridylylation, the PII regulatory proteins (GlnB and homologs), in response to the nitrogen status of the cell that GlnD senses through the glutamine level. Under low glutamine levels, catalyzes the conversion of the PII proteins and UTP to PII-UMP and PPi, while under higher glutamine levels, GlnD hydrolyzes PII-UMP to PII and UMP (deuridylylation). Thus, controls uridylylation state and activity of the PII proteins, and plays an important role in the regulation of nitrogen assimilation and metabolism. The protein is Bifunctional uridylyltransferase/uridylyl-removing enzyme of Nitrobacter winogradskyi (strain ATCC 25391 / DSM 10237 / CIP 104748 / NCIMB 11846 / Nb-255).